The chain runs to 180 residues: Cell division protein SepF (180 aa).

The interval 21 to 40 is disordered; sequence LDDDYDDGRAVGRDDRRAMH. Residues 27–40 show a composition bias toward basic and acidic residues; it reads DGRAVGRDDRRAMH.

The protein belongs to the SepF family. Homodimer. Interacts with FtsZ.

The protein localises to the cytoplasm. Its function is as follows. Cell division protein that is part of the divisome complex and is recruited early to the Z-ring. Probably stimulates Z-ring formation, perhaps through the cross-linking of FtsZ protofilaments. Its function overlaps with FtsA. The sequence is that of Cell division protein SepF from Frankia casuarinae (strain DSM 45818 / CECT 9043 / HFP020203 / CcI3).